The chain runs to 81 residues: ATP synthase subunit c (81 aa).

The next 2 membrane-spanning stretches (helical) occupy residues 5-25 (IAAGALIGGGLIMAGGAIGAG) and 57-77 (VGLVEAAYFINLAFMALFVFA).

The protein belongs to the ATPase C chain family. In terms of assembly, F-type ATPases have 2 components, F(1) - the catalytic core - and F(0) - the membrane proton channel. F(1) has five subunits: alpha(3), beta(3), gamma(1), delta(1), epsilon(1). F(0) has three main subunits: a(1), b(2) and c(10-14). The alpha and beta chains form an alternating ring which encloses part of the gamma chain. F(1) is attached to F(0) by a central stalk formed by the gamma and epsilon chains, while a peripheral stalk is formed by the delta and b chains.

Its subcellular location is the cell membrane. Its function is as follows. F(1)F(0) ATP synthase produces ATP from ADP in the presence of a proton or sodium gradient. F-type ATPases consist of two structural domains, F(1) containing the extramembraneous catalytic core and F(0) containing the membrane proton channel, linked together by a central stalk and a peripheral stalk. During catalysis, ATP synthesis in the catalytic domain of F(1) is coupled via a rotary mechanism of the central stalk subunits to proton translocation. In terms of biological role, key component of the F(0) channel; it plays a direct role in translocation across the membrane. A homomeric c-ring of between 10-14 subunits forms the central stalk rotor element with the F(1) delta and epsilon subunits. The sequence is that of ATP synthase subunit c from Mycobacterium marinum (strain ATCC BAA-535 / M).